We begin with the raw amino-acid sequence, 496 residues long: Glutathione reductase, cytosolic (496 aa).

Residues Ser-32, Gly-33, Glu-52, Thr-69, Cys-70, and Lys-78 each contribute to the FAD site. Ser-32 contributes to the glutathione binding site. Cys-70 and Cys-75 are joined by a disulfide. Tyr-127 lines the glutathione pocket. Gly-143 lines the FAD pocket. NADP(+) contacts are provided by Gly-208, Ile-211, Glu-214, Arg-231, Arg-237, and Gly-294. Residues Asp-335 and Thr-343 each coordinate FAD. Position 373 (Ala-373) interacts with NADP(+). His-469 is an FAD binding site. Residue His-469 is the Proton acceptor of the active site.

Belongs to the class-I pyridine nucleotide-disulfide oxidoreductase family. In terms of assembly, homodimer. Requires FAD as cofactor.

The protein resides in the cytoplasm. It catalyses the reaction 2 glutathione + NADP(+) = glutathione disulfide + NADPH + H(+). Its function is as follows. Catalyzes the reduction of glutathione disulfide (GSSG) to reduced glutathione (GSH). Constitutes the major mechanism to maintain a high GSH:GSSG ratio in the cytosol. In Oryza sativa subsp. japonica (Rice), this protein is Glutathione reductase, cytosolic (GRC2).